The following is a 362-amino-acid chain: Patr class I histocompatibility antigen, B-2 alpha chain (362 aa).

The signal sequence occupies residues 1–24 (MQVTAPRTVLLLLSAALALTETWA). Residues 25–114 (GSHSMKYFYT…LRGYYNQSEA (90 aa)) are alpha-1. Topologically, residues 25–308 (GSHSMKYFYT…EPSSQSTIPI (284 aa)) are extracellular. An N-linked (GlcNAc...) asparagine glycan is attached at Asn-110. An alpha-2 region spans residues 115-206 (GSHIIQRMYG…ENGKETLQRA (92 aa)). 2 disulfides stabilise this stretch: Cys-125/Cys-188 and Cys-227/Cys-283. The alpha-3 stretch occupies residues 207 to 298 (DPPKTHVTHH…GLPKPLTLRW (92 aa)). One can recognise an Ig-like C1-type domain in the interval 209–295 (PKTHVTHHPI…QHEGLPKPLT (87 aa)). The connecting peptide stretch occupies residues 299-308 (EPSSQSTIPI). The chain crosses the membrane as a helical span at residues 309–332 (VGIVAGLAVLAVVVIGAVVAAVMC). The Cytoplasmic portion of the chain corresponds to 333-362 (RRKSSGGKGGSYSQAASSDSAQGSDVSLTA). Residues 336 to 362 (SSGGKGGSYSQAASSDSAQGSDVSLTA) are disordered. Over residues 343–362 (SYSQAASSDSAQGSDVSLTA) the composition is skewed to low complexity.

The protein belongs to the MHC class I family. Heterodimer of an alpha chain and a beta chain (beta-2-microglobulin).

The protein localises to the membrane. Its function is as follows. Involved in the presentation of foreign antigens to the immune system. This chain is Patr class I histocompatibility antigen, B-2 alpha chain, found in Pan troglodytes (Chimpanzee).